A 673-amino-acid polypeptide reads, in one-letter code: Xaa-Pro aminopeptidase 2 (673 aa).

Positions 1–21 are cleaved as a signal peptide; the sequence is MAQACWGCYPWLVLICACAWG. 3 N-linked (GlcNAc...) asparagine glycosylation sites follow: Asn-34, Asn-48, and Asn-64. Arg-115 contacts substrate. Asn-277, Asn-290, and Asn-294 each carry an N-linked (GlcNAc...) asparagine glycan. A substrate-binding site is contributed by His-429. Asp-449 serves as a coordination point for Mn(2+). Residues Asp-449, Asp-460, and His-523 each contribute to the Zn(2+) site. The substrate site is built by His-523, His-532, and Glu-554. The Zn(2+) site is built by Glu-554 and Glu-568. Ala-649 carries the GPI-anchor amidated alanine lipid modification. The propeptide at 650-673 is removed in mature form; sequence RAAPTTSLGSLMTVSALAILGWSV.

The protein belongs to the peptidase M24B family. As to quaternary structure, homotrimer. It depends on Zn(2+) as a cofactor. N-glycosylated. In terms of tissue distribution, kidney.

It localises to the cell membrane. The catalysed reaction is Release of any N-terminal amino acid, including proline, that is linked to proline, even from a dipeptide or tripeptide.. Its activity is regulated as follows. Inhibited by apstatin and the metal ion chelator EDTA. Potently inhibited by the converting enzyme inhibitors cilazaprilat; enalaprilat; L155,212; ramiprilat and YS 980. Also inhibited to a lesser extent by indolaprilat; quinaprilat; spiraprilat; captopril and zofenoprilat. Its function is as follows. Membrane-bound metalloprotease which catalyzes the removal of a penultimate prolyl residue from the N-termini of peptides, such as Arg-Pro-Pro. May play a role in the metabolism of the vasodilator bradykinin. The protein is Xaa-Pro aminopeptidase 2 (XPNPEP2) of Sus scrofa (Pig).